Here is a 396-residue protein sequence, read N- to C-terminus: ATP synthase subunit beta, chloroplastic (396 aa).

Residue 74-81 coordinates ATP; sequence GGAGVGKT.

It belongs to the ATPase alpha/beta chains family. F-type ATPases have 2 components, CF(1) - the catalytic core - and CF(0) - the membrane proton channel. CF(1) has five subunits: alpha(3), beta(3), gamma(1), delta(1), epsilon(1). CF(0) has four main subunits: a(1), b(1), b'(1) and c(9-12).

Its subcellular location is the plastid. The protein localises to the chloroplast thylakoid membrane. It carries out the reaction ATP + H2O + 4 H(+)(in) = ADP + phosphate + 5 H(+)(out). Functionally, produces ATP from ADP in the presence of a proton gradient across the membrane. The catalytic sites are hosted primarily by the beta subunits. The chain is ATP synthase subunit beta, chloroplastic from Adiantum raddianum (Maidenhair fern).